The following is a 436-amino-acid chain: 3-ketoacyl-CoA thiolase (436 aa).

Cysteine 99 acts as the Acyl-thioester intermediate in catalysis. Active-site proton acceptor residues include histidine 392 and cysteine 422.

It belongs to the thiolase-like superfamily. Thiolase family. As to quaternary structure, heterotetramer of two alpha chains (FadJ) and two beta chains (FadI).

Its subcellular location is the cytoplasm. The enzyme catalyses an acyl-CoA + acetyl-CoA = a 3-oxoacyl-CoA + CoA. Its pathway is lipid metabolism; fatty acid beta-oxidation. Functionally, catalyzes the final step of fatty acid oxidation in which acetyl-CoA is released and the CoA ester of a fatty acid two carbons shorter is formed. The protein is 3-ketoacyl-CoA thiolase of Shewanella sediminis (strain HAW-EB3).